Consider the following 543-residue polypeptide: MARYIFITGGVVSSLGKGLMAASLAALLQARGFRVRIRKFDPYLNVDPGTMSPYQHGEVYVTDDGAETDLDLGHYERFTGVSARQADNITSGRIYRDIITKERRGDYLGATVQVIPHVTDAIKDFAQAETEDLDFVLCEIGGTVGDIEGLPFIEALRQLHNELDRDQTCFVHVTLVPYIAAAGELKTKPTQHSVRELTGLGIQPDILLCRCEKPLPEGERAKIAQFCNVRKSAVIPALDASSIYAVPLQYHAEGLDGEVLRHFGLTAPDPDLARWEDIVDRYQNPEGEVTIGVVGKYVGLQDAYKSLNEALAHGGMANRVKVRVKWLDAELFEKGDDEIAAQLEPMHGILVPGGFGERGTEGKIASVRFARERKVPFFGICLGMQMACVEGARNTAGIAGASSTEFGPTDEPVVGIITEWMTAEGLEKRSEGGDLGGTMRLGAYEAHLAGNSHVANIYGSTVISERHRHRYEVNVAYKERLEKGGLVFSGMSPDGLLPEIVERPDHPWFIGVQFHPELKSRPFEPHPLFKGFIAAAVKQARLV.

The segment at 1 to 265 (MARYIFITGG…DGEVLRHFGL (265 aa)) is amidoligase domain. Serine 13 provides a ligand contact to CTP. Position 13 (serine 13) interacts with UTP. Residue 14 to 19 (SLGKGL) coordinates ATP. Tyrosine 54 is a binding site for L-glutamine. Residue aspartate 71 participates in ATP binding. Mg(2+)-binding residues include aspartate 71 and glutamate 139. Residues 146 to 148 (DIE), 186 to 191 (KTKPTQ), and lysine 222 each bind CTP. Residues 186-191 (KTKPTQ) and lysine 222 each bind UTP. Residues 290–542 (TIGVVGKYVG…IAAAVKQARL (253 aa)) enclose the Glutamine amidotransferase type-1 domain. Residue glycine 354 participates in L-glutamine binding. The active-site Nucleophile; for glutamine hydrolysis is cysteine 381. Residues 382–385 (LGMQ), glutamate 405, and arginine 470 contribute to the L-glutamine site. Catalysis depends on residues histidine 515 and glutamate 517.

The protein belongs to the CTP synthase family. In terms of assembly, homotetramer.

The catalysed reaction is UTP + L-glutamine + ATP + H2O = CTP + L-glutamate + ADP + phosphate + 2 H(+). The enzyme catalyses L-glutamine + H2O = L-glutamate + NH4(+). It catalyses the reaction UTP + NH4(+) + ATP = CTP + ADP + phosphate + 2 H(+). It participates in pyrimidine metabolism; CTP biosynthesis via de novo pathway; CTP from UDP: step 2/2. Allosterically activated by GTP, when glutamine is the substrate; GTP has no effect on the reaction when ammonia is the substrate. The allosteric effector GTP functions by stabilizing the protein conformation that binds the tetrahedral intermediate(s) formed during glutamine hydrolysis. Inhibited by the product CTP, via allosteric rather than competitive inhibition. In terms of biological role, catalyzes the ATP-dependent amination of UTP to CTP with either L-glutamine or ammonia as the source of nitrogen. Regulates intracellular CTP levels through interactions with the four ribonucleotide triphosphates. The sequence is that of CTP synthase from Novosphingobium aromaticivorans (strain ATCC 700278 / DSM 12444 / CCUG 56034 / CIP 105152 / NBRC 16084 / F199).